Here is a 1200-residue protein sequence, read N- to C-terminus: PAN2-PAN3 deadenylation complex catalytic subunit Pan2 (1200 aa).

WD repeat units lie at residues 153-193, 195-231, 244-280, and 328-367; these read DENE…QKYA, ETPG…VEHE, VHGN…AITP, and PVGP…SFNP. Residues 368-484 are linker; it reads YSRETEFALP…PTGREEEPLH (117 aa). In terms of domain architecture, USP spans 485 to 923; the sequence is TVSKKYRKVT…VPAILYYVKR (439 aa). A Phosphoserine modification is found at S784. An Exonuclease domain is found at 974 to 1146; the sequence is VGLDAEFVTL…EDARTALQLY (173 aa). The a divalent metal cation site is built by D977, E979, D1086, and D1138. S1188 is modified (phosphoserine).

It belongs to the peptidase C19 family. PAN2 subfamily. In terms of assembly, forms a heterotrimer with an asymmetric homodimer of the regulatory subunit PAN3 to form the poly(A)-nuclease (PAN) deadenylation complex. Interacts with PAN3 isoform 1/Pan3L and isoform 3/Pan3S. Interacts with ZFP36. The cofactor is a divalent metal cation.

Its subcellular location is the cytoplasm. The protein localises to the P-body. The protein resides in the nucleus. The catalysed reaction is Exonucleolytic cleavage of poly(A) to 5'-AMP.. Its activity is regulated as follows. Positively regulated by the regulatory subunit PAN3. Its function is as follows. Catalytic subunit of the poly(A)-nuclease (PAN) deadenylation complex, one of two cytoplasmic mRNA deadenylases involved in general and miRNA-mediated mRNA turnover. PAN specifically shortens poly(A) tails of RNA and the activity is stimulated by poly(A)-binding protein (PABP). PAN deadenylation is followed by rapid degradation of the shortened mRNA tails by the CCR4-NOT complex. Deadenylated mRNAs are then degraded by two alternative mechanisms, namely exosome-mediated 3'-5' exonucleolytic degradation, or deadenylation-dependent mRNA decaping and subsequent 5'-3' exonucleolytic degradation by XRN1. Also acts as an important regulator of the HIF1A-mediated hypoxic response. Required for HIF1A mRNA stability independent of poly(A) tail length regulation. In Mus musculus (Mouse), this protein is PAN2-PAN3 deadenylation complex catalytic subunit Pan2.